We begin with the raw amino-acid sequence, 168 residues long: Photosystem I assembly protein Ycf3 (168 aa).

3 TPR repeats span residues 35–68, 72–105, and 120–153; these read AFTY…EIDP, SYIL…NPFL, and GEQA…TPGN.

It belongs to the Ycf3 family. In terms of assembly, interacts with Y3IP1.

It localises to the plastid. It is found in the chloroplast thylakoid membrane. In terms of biological role, essential for the assembly of the photosystem I (PSI) complex. May act as a chaperone-like factor to guide the assembly of the PSI subunits. The sequence is that of Photosystem I assembly protein Ycf3 from Arabidopsis thaliana (Mouse-ear cress).